Consider the following 176-residue polypeptide: NADH-quinone oxidoreductase subunit B 1 (176 aa).

[4Fe-4S] cluster-binding residues include cysteine 55, cysteine 56, cysteine 120, and cysteine 150.

This sequence belongs to the complex I 20 kDa subunit family. In terms of assembly, NDH-1 is composed of 14 different subunits. Subunits NuoB, C, D, E, F, and G constitute the peripheral sector of the complex. It depends on [4Fe-4S] cluster as a cofactor.

Its subcellular location is the cell inner membrane. The catalysed reaction is a quinone + NADH + 5 H(+)(in) = a quinol + NAD(+) + 4 H(+)(out). Its function is as follows. NDH-1 shuttles electrons from NADH, via FMN and iron-sulfur (Fe-S) centers, to quinones in the respiratory chain. Couples the redox reaction to proton translocation (for every two electrons transferred, four hydrogen ions are translocated across the cytoplasmic membrane), and thus conserves the redox energy in a proton gradient. The sequence is that of NADH-quinone oxidoreductase subunit B 1 from Cereibacter sphaeroides (strain ATCC 17029 / ATH 2.4.9) (Rhodobacter sphaeroides).